A 163-amino-acid polypeptide reads, in one-letter code: Biotin carboxyl carrier protein of acetyl-CoA carboxylase (163 aa).

Positions 85-161 constitute a Biotinyl-binding domain; sequence GDFIVSPLVG…QFGSKLFRIV (77 aa). Lys-127 is subject to N6-biotinyllysine.

As to quaternary structure, homodimer.

It participates in lipid metabolism; fatty acid biosynthesis. Functionally, this protein is a component of the acetyl coenzyme A carboxylase complex; first, biotin carboxylase catalyzes the carboxylation of the carrier protein and then the transcarboxylase transfers the carboxyl group to form malonyl-CoA. The polypeptide is Biotin carboxyl carrier protein of acetyl-CoA carboxylase (accB) (Chlamydia muridarum (strain MoPn / Nigg)).